The primary structure comprises 656 residues: uncharacterized protein (656 aa).

This is an uncharacterized protein from Rickettsia prowazekii (strain Madrid E).